The following is a 2588-amino-acid chain: uncharacterized protein (2588 aa).

Over residues 1-11 the composition is skewed to basic and acidic residues; it reads MSFKNNEKYMD. Disordered regions lie at residues 1–56, 442–598, 774–801, 1303–1357, 1631–1662, 1685–1705, 1820–1856, 2317–2342, and 2415–2437; these read MSFK…NISN, ELES…HFSN, KKEK…NNNI, DSHD…KKKY, QNSN…HHQN, NNNN…KDQP, KLNV…EEND, KKKK…DNIN, and YDNN…NSHT. A compositionally biased stretch (low complexity) spans 42–56; the sequence is NNNNNNNNNNSNISN. Positions 413 to 452 form a coiled coil; it reads YREIEENEKVMEMQRRENELLEEKKRLKQELESYHDDSST. Acidic residues predominate over residues 451-462; sequence STDDDSSADEQQ. Composition is skewed to basic and acidic residues over residues 463–515 and 522–588; these read DERR…KNDD and DHTH…DHTH. The segment covering 785 to 801 has biased composition (low complexity); that stretch reads DNNNNNNNNNNNDNNNI. Acidic residues predominate over residues 1308–1318; it reads NNDDSVNDSND. Residues 1319 to 1331 are compositionally biased toward low complexity; the sequence is DTNNVNVNVNVND. The segment covering 1347-1356 has biased composition (basic residues); the sequence is DKKKKHKKKK. A compositionally biased stretch (polar residues) spans 1631–1643; that stretch reads QNSNNKSNDSLKM. Over residues 1685–1698 the composition is skewed to low complexity; sequence NNNNNNNNNNNNND. Residues 1828 to 1838 are compositionally biased toward basic and acidic residues; it reads QGERQDERNID. Acidic residues predominate over residues 1839–1856; that stretch reads HEDEPVSSNTEDDHEEND. Residues 2416–2434 are compositionally biased toward low complexity; the sequence is DNNNNNDNNNDNNNDNNNN.

This is an uncharacterized protein from Plasmodium falciparum (isolate 3D7).